A 481-amino-acid chain; its full sequence is UDP-N-acetylmuramoyl-L-alanyl-D-glutamate--L-lysine ligase (481 aa).

S42 is a binding site for UDP-N-acetyl-alpha-D-muramoyl-L-alanyl-D-glutamate. G118–T124 serves as a coordination point for ATP. Residues Q158, T160–T161, S187, and R195 contribute to the UDP-N-acetyl-alpha-D-muramoyl-L-alanyl-D-glutamate site. K229 carries the N6-carboxylysine modification. Positions D404–N407 match the L-lysine recognition motif motif.

Belongs to the MurCDEF family. MurE subfamily. Post-translationally, carboxylation is probably crucial for Mg(2+) binding and, consequently, for the gamma-phosphate positioning of ATP.

It localises to the cytoplasm. The catalysed reaction is UDP-N-acetyl-alpha-D-muramoyl-L-alanyl-D-glutamate + L-lysine + ATP = UDP-N-acetyl-alpha-D-muramoyl-L-alanyl-gamma-D-glutamyl-L-lysine + ADP + phosphate + H(+). It participates in cell wall biogenesis; peptidoglycan biosynthesis. Functionally, catalyzes the addition of L-lysine to the nucleotide precursor UDP-N-acetylmuramoyl-L-alanyl-D-glutamate (UMAG) in the biosynthesis of bacterial cell-wall peptidoglycan. This chain is UDP-N-acetylmuramoyl-L-alanyl-D-glutamate--L-lysine ligase, found in Streptococcus pyogenes serotype M6 (strain ATCC BAA-946 / MGAS10394).